A 218-amino-acid chain; its full sequence is Akirin (218 aa).

A disordered region spans residues 96-150; sequence KAIPRSNDFDDDGDQRGDGCSSNYSKAYRAPSSPKSGSDSEGEAPSTSVTDRSSA. The span at 128–147 shows a compositional bias: polar residues; the sequence is SPKSGSDSEGEAPSTSVTDR.

It belongs to the akirin family. Interacts with hda-1, a component of the NuRD complex. Interacts with let-418, a component of the NuRD and MEC complexes. Interacts with the transcription factor ceh-18. Interacts with ima-2. In terms of tissue distribution, localizes to somatic tissues throughout the body, including muscle cells. Expressed in lateral epithelial seam cells, the hyp7 epidermal syncytium, and multiple head and tail neurons.

It is found in the nucleus. Functionally, molecular adapter that acts as a bridge between a variety of multiprotein complexes, and which is involved in antifungal innate immunity, development of the muscle and sister chromatid cohesion. Plays a role in antifungal innate immunity by acting as a bridge between components of the NuRD (Nucleosome Remodeling and Deacetylase) and MEC chromatin remodeling complexes. NuRD and MEC complexes bind to the promoters of antimicrobial peptide genes and may recruit other proteins such as ceh-18 to control gene expression in response to fungal infection. During meiotic prophase I, plays a role in the disassembly of synaptonemal complex proteins and in the regulation of chromosome condensation and segregation. Together with nuclear import receptor ima-2, required for the import and load of cohesin complex proteins in meiotic nuclei, possibly by acting as a bridge between ima-2 and cohesins. Required for embryonic development of muscle tissue. The sequence is that of Akirin from Caenorhabditis elegans.